Reading from the N-terminus, the 262-residue chain is Phosphatidylserine decarboxylase proenzyme (262 aa).

Residues Asp86, His142, and Ser226 each act as charge relay system; for autoendoproteolytic cleavage activity in the active site. Ser226 (schiff-base intermediate with substrate; via pyruvic acid; for decarboxylase activity) is an active-site residue. A Pyruvic acid (Ser); by autocatalysis modification is found at Ser226.

This sequence belongs to the phosphatidylserine decarboxylase family. PSD-B subfamily. Prokaryotic type I sub-subfamily. In terms of assembly, heterodimer of a large membrane-associated beta subunit and a small pyruvoyl-containing alpha subunit. The cofactor is pyruvate. Is synthesized initially as an inactive proenzyme. Formation of the active enzyme involves a self-maturation process in which the active site pyruvoyl group is generated from an internal serine residue via an autocatalytic post-translational modification. Two non-identical subunits are generated from the proenzyme in this reaction, and the pyruvate is formed at the N-terminus of the alpha chain, which is derived from the carboxyl end of the proenzyme. The autoendoproteolytic cleavage occurs by a canonical serine protease mechanism, in which the side chain hydroxyl group of the serine supplies its oxygen atom to form the C-terminus of the beta chain, while the remainder of the serine residue undergoes an oxidative deamination to produce ammonia and the pyruvoyl prosthetic group on the alpha chain. During this reaction, the Ser that is part of the protease active site of the proenzyme becomes the pyruvoyl prosthetic group, which constitutes an essential element of the active site of the mature decarboxylase.

The protein localises to the cell membrane. It catalyses the reaction a 1,2-diacyl-sn-glycero-3-phospho-L-serine + H(+) = a 1,2-diacyl-sn-glycero-3-phosphoethanolamine + CO2. The protein operates within phospholipid metabolism; phosphatidylethanolamine biosynthesis; phosphatidylethanolamine from CDP-diacylglycerol: step 2/2. Catalyzes the formation of phosphatidylethanolamine (PtdEtn) from phosphatidylserine (PtdSer). The polypeptide is Phosphatidylserine decarboxylase proenzyme (Bacillus cereus (strain B4264)).